Consider the following 371-residue polypeptide: Gamma-tocopherol methyltransferase, chloroplastic (371 aa).

The N-terminal 65 residues, 1–65 (MAAAPVFFPS…NSNRIASRLQ (65 aa)), are a transit peptide targeting the chloroplast. An SAM motif I region spans residues 153–162 (IVDVGCGIGG). An SAM motif II region spans residues 216-224 (GQFDLVWSM). Residues 243–252 (VAAPGATIII) are SAM motif III.

This sequence belongs to the class I-like SAM-binding methyltransferase superfamily. gTMT family. As to quaternary structure, homodimer.

Its subcellular location is the plastid. It is found in the chloroplast inner membrane. It catalyses the reaction picrinine + S-adenosyl-L-methionine = ervincine + S-adenosyl-L-homocysteine + H(+). It functions in the pathway alkaloid biosynthesis; vindoline biosynthesis. Its function is as follows. S-adenosyl-L-methionine-dependent N-methyltransferase involved in the biosynthesis of biologically active monoterpenoid indole alkaloids (MIAs) natural products including vindoline. Inactive with picrinine as substrate. The chain is Gamma-tocopherol methyltransferase, chloroplastic from Catharanthus roseus (Madagascar periwinkle).